The sequence spans 414 residues: Esterase FrsA (414 aa).

This sequence belongs to the FrsA family.

It catalyses the reaction a carboxylic ester + H2O = an alcohol + a carboxylate + H(+). Functionally, catalyzes the hydrolysis of esters. The polypeptide is Esterase FrsA (Salmonella agona (strain SL483)).